The primary structure comprises 180 residues: Nucleoside triphosphate/diphosphate phosphatase (180 aa).

R26 functions as the Proton donor in the catalytic mechanism. 6 residues coordinate Mg(2+): N90, D106, D108, D110, D123, and E126.

It belongs to the Ntdp family. Mg(2+) serves as cofactor.

It carries out the reaction a ribonucleoside 5'-triphosphate + H2O = a ribonucleoside 5'-diphosphate + phosphate + H(+). It catalyses the reaction a ribonucleoside 5'-diphosphate + H2O = a ribonucleoside 5'-phosphate + phosphate + H(+). Has nucleoside phosphatase activity towards nucleoside triphosphates and nucleoside diphosphates. The sequence is that of Nucleoside triphosphate/diphosphate phosphatase from Staphylococcus haemolyticus (strain JCSC1435).